A 356-amino-acid chain; its full sequence is S-adenosylmethionine:tRNA ribosyltransferase-isomerase (356 aa).

This sequence belongs to the QueA family. As to quaternary structure, monomer.

Its subcellular location is the cytoplasm. The catalysed reaction is 7-aminomethyl-7-carbaguanosine(34) in tRNA + S-adenosyl-L-methionine = epoxyqueuosine(34) in tRNA + adenine + L-methionine + 2 H(+). It functions in the pathway tRNA modification; tRNA-queuosine biosynthesis. Transfers and isomerizes the ribose moiety from AdoMet to the 7-aminomethyl group of 7-deazaguanine (preQ1-tRNA) to give epoxyqueuosine (oQ-tRNA). The polypeptide is S-adenosylmethionine:tRNA ribosyltransferase-isomerase (Yersinia pseudotuberculosis serotype O:3 (strain YPIII)).